The primary structure comprises 252 residues: 5-oxoprolinase subunit A 1 (252 aa).

Belongs to the LamB/PxpA family. Forms a complex composed of PxpA, PxpB and PxpC.

It carries out the reaction 5-oxo-L-proline + ATP + 2 H2O = L-glutamate + ADP + phosphate + H(+). In terms of biological role, catalyzes the cleavage of 5-oxoproline to form L-glutamate coupled to the hydrolysis of ATP to ADP and inorganic phosphate. The protein is 5-oxoprolinase subunit A 1 of Pseudomonas putida (strain ATCC 47054 / DSM 6125 / CFBP 8728 / NCIMB 11950 / KT2440).